The sequence spans 23 residues: Textile convulsant peptide (23 aa).

Intrachain disulfides connect cysteine 2–cysteine 10, cysteine 5–cysteine 15, and cysteine 9–cysteine 20. Residue proline 23 is modified to Proline amide; partial.

The C-terminal amidation is described in Ref.1 and PubMed:23031820, but not in PubMed:22709442 and PubMed:36235146. Post-translationally, ju et al. (2022) describe a disulfide connectivity (C55-C61; C56-C69; C66-C68) that differs for the usual one. Expressed by the venom duct. Is present in all duct parts with a highest content in part 2 (proximal of the venom bulb) and then decreases in concentration toward the end of the duct.

It localises to the secreted. Its function is as follows. Causes convulsions mice. This Conus textile (Cloth-of-gold cone) protein is Textile convulsant peptide.